The chain runs to 265 residues: Undecaprenyl-diphosphatase 1 (265 aa).

The next 7 helical transmembrane spans lie at 4–24, 42–62, 84–104, 108–128, 184–204, 217–237, and 245–265; these read IITAFILGIVEGLAEFLPISS, AKTFEIVIQLGAILAIAILYH, FHVFLGVFPAVVAGLLLHDVI, LFQPYTVVIGLVAGAILMIFA, SEFSFLIALPVMVGATGLDLL, MFAVGFITSFIVAMLAVVTFL, and LKPFAYYRILLAILFTVFVLL.

It belongs to the UppP family.

It localises to the cell membrane. It catalyses the reaction di-trans,octa-cis-undecaprenyl diphosphate + H2O = di-trans,octa-cis-undecaprenyl phosphate + phosphate + H(+). In terms of biological role, catalyzes the dephosphorylation of undecaprenyl diphosphate (UPP). Confers resistance to bacitracin. The sequence is that of Undecaprenyl-diphosphatase 1 from Bacillus anthracis.